A 1082-amino-acid polypeptide reads, in one-letter code: RNA-directed RNA polymerase (1082 aa).

The RdRp catalytic domain maps to 498 to 670 (LSYGDVTRYL…ALASLTGCEI (173 aa)).

Belongs to the reoviridae RNA-directed RNA polymerase family. In terms of assembly, interacts with VP3 (Potential). Interacts with VP2; this interaction activates VP1. Interacts with NSP5; this interaction is probably necessary for the formation of functional virus factories. Interacts with NSP2; this interaction is weak. Requires Mg(2+) as cofactor.

It localises to the virion. The catalysed reaction is RNA(n) + a ribonucleoside 5'-triphosphate = RNA(n+1) + diphosphate. RNA-directed RNA polymerase that is involved in both transcription and genome replication. Together with VP3 capping enzyme, forms an enzyme complex positioned near the channels situated at each of the five-fold vertices of the core. Following infection, the outermost layer of the virus is lost, leaving a double-layered particle (DLP) made up of the core and VP6 shell. VP1 then catalyzes the transcription of fully conservative plus-strand genomic RNAs that are extruded through the DLP's channels into the cytoplasm where they function as mRNAs for translation of viral proteins. One copy of each of the viral (+)RNAs is also recruited during core assembly, together with newly synthesized polymerase complexes and VP2. The polymerase of these novo-formed particles catalyzes the synthesis of complementary minus-strands leading to dsDNA formation. To do so, the polymerase specifically recognizes conserved 3' sequence(s) in plus-strand RNA templates. Once dsRNA synthesis is complete, the polymerase switches to the transcriptional mode, thus providing secondary transcription. In Rotavirus C (strain RVC/Pig/United States/Cowden/1980) (RV-C), this protein is RNA-directed RNA polymerase.